A 613-amino-acid polypeptide reads, in one-letter code: Potassium voltage-gated channel subfamily A member 5 (613 aa).

The disordered stretch occupies residues 1–108; that stretch reads MEIALVPLEN…EGDPGLGTVE (108 aa). A tetramerization domain region spans residues 1–211; sequence MEIALVPLEN…FYQLGDEAME (211 aa). Residues 1-247 are Cytoplasmic-facing; it reads MEIALVPLEN…LIFEYPESSG (247 aa). The span at 45–62 shows a compositional bias: basic and acidic residues; sequence GPKEPAPKGRGAQRDADS. 2 tandem repeats follow at residues 61-71 and 72-82. A 2 X 11 AA tandem repeat of D-[SP]-G-V-R-P-L-P-P-L-P region spans residues 61–82; that stretch reads DSGVRPLPPLPDPGVRPLPPLP. The segment covering 66-83 has biased composition (pro residues); that stretch reads PLPPLPDPGVRPLPPLPE. The segment covering 84–93 has biased composition (basic and acidic residues); sequence ELPRPRRPPP. K221 participates in a covalent cross-link: Glycyl lysine isopeptide (Lys-Gly) (interchain with G-Cter in SUMO). The chain crosses the membrane as a helical span at residues 248–269; sequence SARAIAIVSVLVILISIITFCL. The Extracellular portion of the chain corresponds to 270–323; the sequence is ETLPEFRDERELLRHPPAPHQPPAPAPGANGSGVMAPPSGPTVAPLLPRTLADP. The segment at 282-304 is disordered; sequence LRHPPAPHQPPAPAPGANGSGVM. Pro residues predominate over residues 285–295; that stretch reads PPAPHQPPAPA. A helical transmembrane segment spans residues 324 to 345; sequence FFIVETTCVIWFTFELLVRFFA. C346 carries S-palmitoyl cysteine lipidation. At 346-356 the chain is on the cytoplasmic side; the sequence is CPSKAGFSRNI. The helical transmembrane segment at 357-377 threads the bilayer; sequence MNIIDVVAIFPYFITLGTELA. At 378–395 the chain is on the extracellular side; the sequence is EQQPGGGGGGQNGQQAMS. A helical; Voltage-sensor membrane pass occupies residues 396-416; that stretch reads LAILRVIRLVRVFRIFKLSRH. The Cytoplasmic segment spans residues 417-431; the sequence is SKGLQILGKTLQASM. The S4-S5 linker stretch occupies residues 418-431; it reads KGLQILGKTLQASM. A helical transmembrane segment spans residues 432-453; that stretch reads RELGLLIFFLFIGVILFSSAVY. Over 454-467 the chain is Extracellular; it reads FAEADNQGTHFSSI. Residues 468 to 479 constitute an intramembrane region (helical); that stretch reads PDAFWWAVVTMT. The Selectivity filter signature appears at 480–485; it reads TVGYGD. An intramembrane segment occupies 480-487; that stretch reads TVGYGDMR. Residues 488–494 lie on the Extracellular side of the membrane; the sequence is PITVGGK. The helical transmembrane segment at 495–523 threads the bilayer; the sequence is IVGSLCAIAGVLTIALPVPVIVSNFNYFY. The Cytoplasmic portion of the chain corresponds to 524-613; sequence HRETDHEEPA…CLDTSRETDL (90 aa). The disordered stretch occupies residues 532–559; the sequence is PAVLKEEQGTQSQGPGLDRGVQRKVSGS. K536 participates in a covalent cross-link: Glycyl lysine isopeptide (Lys-Gly) (interchain with G-Cter in SUMO). Residue S557 is modified to Phosphoserine; by PKA. The PDZ-binding signature appears at 611–613; sequence TDL.

It belongs to the potassium channel family. A (Shaker) (TC 1.A.1.2) subfamily. Kv1.5/KCNA5 sub-subfamily. In terms of assembly, homotetramer and heterotetramer of potassium channel proteins. Interacts with DLG1, which enhances channel currents. Forms a ternary complex with DLG1 and CAV3. Interacts with KCNAB1. Interacts with UBE2I. Interacts with XIRP2; the interaction is required for normal action potential configuration in the heart. Glycosylated. Post-translationally, sumoylated on Lys-221, and Lys-536, preferentially with SUMO3. Sumoylation regulates the voltage sensitivity of the channel. In terms of tissue distribution, pancreatic islets and insulinoma.

Its subcellular location is the cell membrane. The catalysed reaction is K(+)(in) = K(+)(out). With respect to regulation, inhibited by 4-aminopyridine, nicotine, bepridil, correolide, and endothelin-1. Functionally, voltage-gated potassium channel that mediates transmembrane potassium transport in excitable membranes. Forms tetrameric potassium-selective channels through which potassium ions pass in accordance with their electrochemical gradient. The channel alternates between opened and closed conformations in response to the voltage difference across the membrane. Can form functional homotetrameric channels and heterotetrameric channels that contain variable proportions of KCNA1, KCNA2, KCNA4, KCNA5, and possibly other family members as well; channel properties depend on the type of alpha subunits that are part of the channel. Channel properties are modulated by cytoplasmic beta subunits that regulate the subcellular location of the alpha subunits and promote rapid inactivation. Homotetrameric channels display rapid activation and slow inactivation. Required for normal electrical conduction including formation of the infranodal ventricular conduction system and normal action potential configuration, as a result of its interaction with XIRP2. May play a role in regulating the secretion of insulin in normal pancreatic islets. Its function is as follows. Exhibits a faster depolarization rate, reduced voltage-dependent recovery from inactivation and an excessive cumulative inactivation. This is Potassium voltage-gated channel subfamily A member 5 (KCNA5) from Homo sapiens (Human).